Reading from the N-terminus, the 509-residue chain is Maturase K (509 aa).

The protein belongs to the intron maturase 2 family. MatK subfamily.

It is found in the plastid. It localises to the chloroplast. Functionally, usually encoded in the trnK tRNA gene intron. Probably assists in splicing its own and other chloroplast group II introns. The polypeptide is Maturase K (Nicotiana tomentosiformis (Tobacco)).